Consider the following 89-residue polypeptide: DNA/RNA-binding protein Alba 2 (89 aa).

Belongs to the histone-like Alba family. Forms homodimers and homotetramers. Interacts with Alba 1.

It is found in the cytoplasm. The protein resides in the chromosome. Binds double-stranded DNA tightly but without sequence specificity. Involved in DNA compaction. This is DNA/RNA-binding protein Alba 2 from Archaeoglobus fulgidus (strain ATCC 49558 / DSM 4304 / JCM 9628 / NBRC 100126 / VC-16).